A 60-amino-acid polypeptide reads, in one-letter code: LKCNKLIPLAYKTCPAGKNLCYKMYMVSNKTVPVKRGCIDVCPKNSLVLKYECCNTDRCN.

Disulfide bonds link cysteine 3-cysteine 21, cysteine 14-cysteine 38, cysteine 42-cysteine 53, and cysteine 54-cysteine 59.

The protein belongs to the three-finger toxin family. Short-chain subfamily. Type IA cytotoxin sub-subfamily. As to quaternary structure, monomer in solution; Homodimer and oligomer in the presence of negatively charged lipids forming a pore with a size ranging between 20 and 30 Angstroms. In terms of tissue distribution, expressed by the venom gland.

The protein localises to the secreted. The protein resides in the target cell membrane. Functionally, shows cytolytic activity on many different cells by forming pore in lipid membranes. In vivo, increases heart rate or kills the animal by cardiac arrest. In addition, it binds to heparin with high affinity, interacts with Kv channel-interacting protein 1 (KCNIP1) in a calcium-independent manner, and binds to integrin alpha-V/beta-3 (ITGAV/ITGB3) with moderate affinity. This chain is Cytotoxin 1, found in Naja naja (Indian cobra).